A 301-amino-acid chain; its full sequence is GTPase Era (301 aa).

Residues 7–175 enclose the Era-type G domain; the sequence is YCGFIAIVGR…AAIVRKHLPE (169 aa). Residues 15-22 form a G1 region; that stretch reads GRPNVGKS. 15–22 is a binding site for GTP; the sequence is GRPNVGKS. Positions 41 to 45 are G2; the sequence is QTTRH. The interval 62 to 65 is G3; sequence DTPG. Residues 62–66 and 124–127 each bind GTP; these read DTPGL and NKVD. Positions 124-127 are G4; sequence NKVD. Residues 154 to 156 form a G5 region; it reads ISA. Positions 206 to 283 constitute a KH type-2 domain; that stretch reads LGAELPYSVT…HLELWVKVKS (78 aa).

Belongs to the TRAFAC class TrmE-Era-EngA-EngB-Septin-like GTPase superfamily. Era GTPase family. Monomer.

It is found in the cytoplasm. The protein resides in the cell inner membrane. Functionally, an essential GTPase that binds both GDP and GTP, with rapid nucleotide exchange. Plays a role in 16S rRNA processing and 30S ribosomal subunit biogenesis and possibly also in cell cycle regulation and energy metabolism. This Shigella dysenteriae serotype 1 (strain Sd197) protein is GTPase Era.